The chain runs to 398 residues: Galactose-3-O-sulfotransferase 2 (398 aa).

Topologically, residues 1–11 (MLSALGGLQRC) are cytoplasmic. Residues 12–29 (FWAILLLALTVSLLAGFL) form a helical; Signal-anchor for type II membrane protein membrane-spanning segment. Topologically, residues 30–398 (HKDVRLLMPL…PPKNIPFLGA (369 aa)) are lumenal. N-linked (GlcNAc...) asparagine glycosylation is found at Asn77, Asn133, Asn180, Asn288, Asn330, and Asn360.

It belongs to the galactose-3-O-sulfotransferase family.

Its subcellular location is the golgi apparatus. It localises to the golgi stack membrane. The protein operates within protein modification; carbohydrate sulfation. Its activity is regulated as follows. Strongly inhibited by Cu(2+) and Zn(2+). Functionally, transfers a sulfate group to the hydroxyl group at C3 of non-reducing beta-galactosyl residues. Acts both on type 1 (Gal-beta-1,3-GlcNAc) and type 2 (Gal-beta-1,4-GlcNAc) chains with similar efficiency. The polypeptide is Galactose-3-O-sulfotransferase 2 (GAL3ST2) (Sus scrofa (Pig)).